Reading from the N-terminus, the 263-residue chain is Endonuclease 8 (263 aa).

P2 serves as the catalytic Schiff-base intermediate with DNA. E3 (proton donor) is an active-site residue. Catalysis depends on K53, which acts as the Proton donor; for beta-elimination activity. DNA contacts are provided by Q70, R125, and N169. The segment at K229–H263 adopts an FPG-type zinc-finger fold. R253 serves as the catalytic Proton donor; for delta-elimination activity.

This sequence belongs to the FPG family. Zn(2+) is required as a cofactor.

The catalysed reaction is 2'-deoxyribonucleotide-(2'-deoxyribose 5'-phosphate)-2'-deoxyribonucleotide-DNA = a 3'-end 2'-deoxyribonucleotide-(2,3-dehydro-2,3-deoxyribose 5'-phosphate)-DNA + a 5'-end 5'-phospho-2'-deoxyribonucleoside-DNA + H(+). Involved in base excision repair of DNA damaged by oxidation or by mutagenic agents. Acts as a DNA glycosylase that recognizes and removes damaged bases. Has a preference for oxidized pyrimidines, such as thymine glycol, 5,6-dihydrouracil and 5,6-dihydrothymine. Has AP (apurinic/apyrimidinic) lyase activity and introduces nicks in the DNA strand. Cleaves the DNA backbone by beta-delta elimination to generate a single-strand break at the site of the removed base with both 3'- and 5'-phosphates. This chain is Endonuclease 8, found in Shigella dysenteriae serotype 1 (strain Sd197).